The following is a 274-amino-acid chain: MAIHLYKTSTPSTRNGAVDSQVKSNPRNNLICGQHHCGKGRNARGIITARHRGGGHKRLYRKIDFRRNAKDIYGRIVTIEYDPNRNAYICLIHYGDGEKRYILHPRGAIIGDTIVSGTEVPIKMGNALPLTDMPLGTAIHNIEITLGKGGQLARAAGAVAKLIAKEGKSATLKLPSGEVRLISKNCSATVGQVGNVGVNQKSLGRAGSKRWLGKRPVVRGVVMNPVDHPHGGGEGRAPIGRKKPVTPWGYPALGRRTRKRKKYSETLILRRRSK.

2 disordered regions span residues 1–21 (MAIHLYKTSTPSTRNGAVDSQ) and 224–252 (NPVDHPHGGGEGRAPIGRKKPVTPWGYPA).

This sequence belongs to the universal ribosomal protein uL2 family. Part of the 50S ribosomal subunit.

It is found in the plastid. Its subcellular location is the chloroplast. The chain is Large ribosomal subunit protein uL2cz/uL2cy (rpl2-A) from Olimarabidopsis pumila (Dwarf rocket).